The chain runs to 420 residues: Serine hydroxymethyltransferase (420 aa).

(6S)-5,6,7,8-tetrahydrofolate is bound by residues Leu-118 and 122–124 (GHL). Lys-227 is modified (N6-(pyridoxal phosphate)lysine).

This sequence belongs to the SHMT family. In terms of assembly, homodimer. It depends on pyridoxal 5'-phosphate as a cofactor.

The protein resides in the cytoplasm. The enzyme catalyses (6R)-5,10-methylene-5,6,7,8-tetrahydrofolate + glycine + H2O = (6S)-5,6,7,8-tetrahydrofolate + L-serine. The protein operates within one-carbon metabolism; tetrahydrofolate interconversion. It participates in amino-acid biosynthesis; glycine biosynthesis; glycine from L-serine: step 1/1. Catalyzes the reversible interconversion of serine and glycine with tetrahydrofolate (THF) serving as the one-carbon carrier. This reaction serves as the major source of one-carbon groups required for the biosynthesis of purines, thymidylate, methionine, and other important biomolecules. Also exhibits THF-independent aldolase activity toward beta-hydroxyamino acids, producing glycine and aldehydes, via a retro-aldol mechanism. This is Serine hydroxymethyltransferase from Persephonella marina (strain DSM 14350 / EX-H1).